A 307-amino-acid polypeptide reads, in one-letter code: N-acetylneuraminate lyase (307 aa).

2 residues coordinate aceneuramate: Thr-51 and Thr-52. Catalysis depends on Tyr-143, which acts as the Proton donor. Lys-173 acts as the Schiff-base intermediate with substrate in catalysis. Positions 175, 199, 201, 202, and 218 each coordinate aceneuramate.

It belongs to the DapA family. NanA subfamily. Homotetramer.

Its subcellular location is the cytoplasm. It catalyses the reaction aceneuramate = aldehydo-N-acetyl-D-mannosamine + pyruvate. It participates in amino-sugar metabolism; N-acetylneuraminate degradation. Catalyzes the cleavage of N-acetylneuraminic acid (sialic acid) to form pyruvate and N-acetylmannosamine via a Schiff base intermediate. It prevents sialic acids from being recycled and returning to the cell surface. Involved in the N-glycolylneuraminic acid (Neu5Gc) degradation pathway. The protein is N-acetylneuraminate lyase of Danio rerio (Zebrafish).